A 282-amino-acid polypeptide reads, in one-letter code: D-alanine aminotransferase (282 aa).

Position 32 (Tyr-32) interacts with substrate. A pyridoxal 5'-phosphate-binding site is contributed by Arg-51. Residues Arg-99 and His-101 each coordinate substrate. Residue Lys-146 is the Proton acceptor of the active site. At Lys-146 the chain carries N6-(pyridoxal phosphate)lysine. Glu-178 contacts pyridoxal 5'-phosphate.

It belongs to the class-IV pyridoxal-phosphate-dependent aminotransferase family. In terms of assembly, homodimer. Requires pyridoxal 5'-phosphate as cofactor.

It carries out the reaction D-alanine + 2-oxoglutarate = D-glutamate + pyruvate. Its function is as follows. Acts on the D-isomers of alanine, leucine, aspartate, glutamate, aminobutyrate, norvaline and asparagine. The enzyme transfers an amino group from a substrate D-amino acid to the pyridoxal phosphate cofactor to form pyridoxamine and an alpha-keto acid in the first half-reaction. The second half-reaction is the reverse of the first, transferring the amino group from the pyridoxamine to a second alpha-keto acid to form the product D-amino acid via a ping-pong mechanism. This is an important process in the formation of D-alanine and D-glutamate, which are essential bacterial cell wall components. The chain is D-alanine aminotransferase (dat) from Staphylococcus aureus (strain MSSA476).